The following is a 198-amino-acid chain: Peptide methionine sulfoxide reductase MsrA 2 (198 aa).

The active site involves Cys32.

It belongs to the MsrA Met sulfoxide reductase family.

It catalyses the reaction L-methionyl-[protein] + [thioredoxin]-disulfide + H2O = L-methionyl-(S)-S-oxide-[protein] + [thioredoxin]-dithiol. It carries out the reaction [thioredoxin]-disulfide + L-methionine + H2O = L-methionine (S)-S-oxide + [thioredoxin]-dithiol. In terms of biological role, has an important function as a repair enzyme for proteins that have been inactivated by oxidation. Catalyzes the reversible oxidation-reduction of methionine sulfoxide in proteins to methionine. In Rhizobium meliloti (strain 1021) (Ensifer meliloti), this protein is Peptide methionine sulfoxide reductase MsrA 2 (msrA2).